A 568-amino-acid polypeptide reads, in one-letter code: Phosphoribosylaminoimidazole carboxylase (568 aa).

The ATP-grasp domain occupies 110-298 (KNHLIKHDVA…QFEAHVRAVT (189 aa)). ATP is bound at residue 138–193 (GEKFGYPYMLKSRTLAYDGRGNFVVKDKSYCEKALEFLKDRPLYAEKWCPFTKELA).

It in the C-terminal section; belongs to the AIR carboxylase family. Class I subfamily.

The catalysed reaction is 5-amino-1-(5-phospho-D-ribosyl)imidazole-4-carboxylate + H(+) = 5-amino-1-(5-phospho-beta-D-ribosyl)imidazole + CO2. Its pathway is purine metabolism; IMP biosynthesis via de novo pathway; 5-amino-1-(5-phospho-D-ribosyl)imidazole-4-carboxylate from 5-amino-1-(5-phospho-D-ribosyl)imidazole (carboxylase route): step 1/1. In Candida albicans (strain SC5314 / ATCC MYA-2876) (Yeast), this protein is Phosphoribosylaminoimidazole carboxylase (ADE2).